The following is a 362-amino-acid chain: S-adenosylmethionine:tRNA ribosyltransferase-isomerase (362 aa).

This sequence belongs to the QueA family. As to quaternary structure, monomer.

It is found in the cytoplasm. The enzyme catalyses 7-aminomethyl-7-carbaguanosine(34) in tRNA + S-adenosyl-L-methionine = epoxyqueuosine(34) in tRNA + adenine + L-methionine + 2 H(+). It participates in tRNA modification; tRNA-queuosine biosynthesis. Functionally, transfers and isomerizes the ribose moiety from AdoMet to the 7-aminomethyl group of 7-deazaguanine (preQ1-tRNA) to give epoxyqueuosine (oQ-tRNA). The sequence is that of S-adenosylmethionine:tRNA ribosyltransferase-isomerase from Yersinia enterocolitica serotype O:8 / biotype 1B (strain NCTC 13174 / 8081).